Consider the following 178-residue polypeptide: Fimbrial adapter PapK (178 aa).

Positions 1-21 (MIKSTGALLLFAALSAGQAIA) are cleaved as a signal peptide.

The protein localises to the secreted. It localises to the fimbrium. Functionally, adapter that links the pilus rod to the base of the tip fibrillum. Regulates the length of the tip fibrillum and joins it to the pilus rod. Pili are polar filaments radiating from the surface of the bacterium to a length of 0.5-1.5 micrometers and numbering 100-300 per cell, and enable bacteria to colonize the epithelium of specific host organs. The protein is Fimbrial adapter PapK (papK) of Escherichia coli O6:H1 (strain CFT073 / ATCC 700928 / UPEC).